The sequence spans 481 residues: Pentatricopeptide repeat-containing protein 8, mitochondrial (481 aa).

A mitochondrion-targeting transit peptide spans 1–55; that stretch reads MQGFGSQIFRKLLRSSNAKVSDALLQNTRTLFTAPPLHSGLQTSFTAETQQHVRQ. PPR repeat units lie at residues 137-172 and 365-399; these read SARF…EFLP and SIST…GLKP.

The protein localises to the mitochondrion. Functionally, mitochondrial RNA-binding protein involved in mitochondrial translation. The cox1 mRNA is one target but it is not clear if ppr8 has a single or multiple targets. The chain is Pentatricopeptide repeat-containing protein 8, mitochondrial (ppr8) from Schizosaccharomyces pombe (strain 972 / ATCC 24843) (Fission yeast).